The chain runs to 433 residues: 5-methylthioadenosine/S-adenosylhomocysteine deaminase (433 aa).

2 residues coordinate Zn(2+): H67 and H69. Residues E96, R148, and H186 each coordinate substrate. H213 is a binding site for Zn(2+). 2 residues coordinate substrate: E216 and D301. Residue D301 participates in Zn(2+) binding.

It belongs to the metallo-dependent hydrolases superfamily. MTA/SAH deaminase family. Zn(2+) is required as a cofactor.

The catalysed reaction is S-adenosyl-L-homocysteine + H2O + H(+) = S-inosyl-L-homocysteine + NH4(+). It catalyses the reaction S-methyl-5'-thioadenosine + H2O + H(+) = S-methyl-5'-thioinosine + NH4(+). Functionally, catalyzes the deamination of 5-methylthioadenosine and S-adenosyl-L-homocysteine into 5-methylthioinosine and S-inosyl-L-homocysteine, respectively. Is also able to deaminate adenosine. The sequence is that of 5-methylthioadenosine/S-adenosylhomocysteine deaminase from Desulforamulus reducens (strain ATCC BAA-1160 / DSM 100696 / MI-1) (Desulfotomaculum reducens).